We begin with the raw amino-acid sequence, 430 residues long: Tol-Pal system protein TolB (430 aa).

The signal sequence occupies residues 1 to 21; it reads MRRFVTLLIALLCLSATAVQA.

Belongs to the TolB family. The Tol-Pal system is composed of five core proteins: the inner membrane proteins TolA, TolQ and TolR, the periplasmic protein TolB and the outer membrane protein Pal. They form a network linking the inner and outer membranes and the peptidoglycan layer.

The protein localises to the periplasm. In terms of biological role, part of the Tol-Pal system, which plays a role in outer membrane invagination during cell division and is important for maintaining outer membrane integrity. The protein is Tol-Pal system protein TolB of Syntrophotalea carbinolica (strain DSM 2380 / NBRC 103641 / GraBd1) (Pelobacter carbinolicus).